We begin with the raw amino-acid sequence, 638 residues long: MFAELNAKDQFNELLKHLSSTSCTTMQADRVETSSSVRKKKWMSRRRGACDMCKSKKVRCDGGTPCSYCNLHDLRCEYQLSKKQQTNKPPVASAAEDVSIVPSYAENNGSGVTTQVPSPSDVQVLPELTANRGSGNAGNILQDMMLATNDRHSMPVMFDGYAHDNFSASPIEWVGSDSLAAPFSVDMGNLNALGTLPWSPPKTAYSEPNLDIPYPIEHTTDVSASLPSISQFELNLPLSPAGPTRDMYDEKMWEEVSPKRQRLGNLSPTQQDEVEAIFRRLSDAQSQMSFGLGGEQYDSHSRWYWSDTALMEKCKSACFEEPLGISTFLTRSHFDDYVQQARESPSIQGLAVRPLIDSVMAFGFHILAARSQPSAGSDVSRKAITRLRMALSSRDAVQRSPDTLLKLQMTISEQIDHKIHTELLSYAVSCARSRRFLHRDSVYMTMTKEKEYLARRSMWYLYSMEVVHSIRDGMPPILTPDWTDYALPEVGKDTDTDWLLIQCQHANALSSAVNALYSPRALCQTVAERERNMMQAHKLLENWRTSLPVHLQNIHRHETGYVALDDQKTRHLTLTMVGKYHEAIFIIFFPWTGSQSKGLISEHYRKRSMELCVKSAQAVLAIAARITSCDILGGSLAS.

Residues 50 to 76 (CDMCKSKKVRCDGGTPCSYCNLHDLRC) constitute a DNA-binding region (zn(2)-C6 fungal-type).

Its subcellular location is the nucleus. Transcription factor that regulates specifically the terrein biosynthesis gene cluster. Recognizes CGG direct repeat consensus sequences in the terrein cluster forming the high affinity consensus motif TCGGHHWYHCGGH. This Aspergillus terreus (strain NIH 2624 / FGSC A1156) protein is Terrein cluster-specific transcription factor terR.